The sequence spans 141 residues: Hemoglobin subunit alpha-D (141 aa).

The 141-residue stretch at 1 to 141 (VLTGEDKKHV…VAAVLAEKYR (141 aa)) folds into the Globin domain. The heme b site is built by histidine 58 and histidine 87.

Belongs to the globin family. As to quaternary structure, heterotetramer of two alpha-D chains and two beta chains. As to expression, red blood cells.

Functionally, involved in oxygen transport from the lung to the various peripheral tissues. The protein is Hemoglobin subunit alpha-D (HBAD) of Turdus merula (Common blackbird).